A 273-amino-acid polypeptide reads, in one-letter code: Bis(5'-nucleosyl)-tetraphosphatase, symmetrical (273 aa).

This sequence belongs to the Ap4A hydrolase family.

The catalysed reaction is P(1),P(4)-bis(5'-adenosyl) tetraphosphate + H2O = 2 ADP + 2 H(+). Hydrolyzes diadenosine 5',5'''-P1,P4-tetraphosphate to yield ADP. This is Bis(5'-nucleosyl)-tetraphosphatase, symmetrical from Aliivibrio salmonicida (strain LFI1238) (Vibrio salmonicida (strain LFI1238)).